The sequence spans 294 residues: Homoserine kinase (294 aa).

Residue 83–93 participates in ATP binding; that stretch reads PLARGLGSSAS.

This sequence belongs to the GHMP kinase family. Homoserine kinase subfamily.

Its subcellular location is the cytoplasm. It carries out the reaction L-homoserine + ATP = O-phospho-L-homoserine + ADP + H(+). The protein operates within amino-acid biosynthesis; L-threonine biosynthesis; L-threonine from L-aspartate: step 4/5. Catalyzes the ATP-dependent phosphorylation of L-homoserine to L-homoserine phosphate. The protein is Homoserine kinase of Oceanobacillus iheyensis (strain DSM 14371 / CIP 107618 / JCM 11309 / KCTC 3954 / HTE831).